A 304-amino-acid chain; its full sequence is MWFKNLTLYRFNKPFAVETEALETALADFTFSPCSSQDVSKFGFSNALGKKGSSLVHSADNRHLICVTKEEKILPGQVIKEALEEKVALIEDEENRKMAKKEKDALKDEIITSLLPRAFSRRSQTHALILPELEMILVDSSSATKAEELLALLRKALGSLPVIPLSFKAPVESNLTEWLKLGSAPLPFEMQDEAELKSEADEGGIVRFKQQDLKEDEVLAHLATGKQVHKLALHFGQSIALLLQSDASVKRLKFSEEFRAGNDEVGTDDPMARLDADFALMGSELVALMHALVAALGGLEEAQV.

The protein belongs to the RdgC family.

Its subcellular location is the cytoplasm. The protein localises to the nucleoid. In terms of biological role, may be involved in recombination. This chain is Recombination-associated protein RdgC, found in Shewanella baltica (strain OS223).